Here is a 385-residue protein sequence, read N- to C-terminus: Enoyl-[acyl-carrier-protein] reductase, mitochondrial (385 aa).

The active-site Proton donor is the Y78. Residues N162, 190 to 193 (TSGV), 213 to 215 (RDR), 288 to 291 (YGGM), 313 to 315 (YWV), and K378 each bind NADP(+).

Belongs to the zinc-containing alcohol dehydrogenase family. Quinone oxidoreductase subfamily. Homodimer.

It is found in the mitochondrion matrix. The enzyme catalyses a 2,3-saturated acyl-[ACP] + NADP(+) = a (2E)-enoyl-[ACP] + NADPH + H(+). Its function is as follows. Catalyzes the NADPH-dependent reduction of trans-2-enoyl thioesters in mitochondrial fatty acid synthesis (fatty acid synthesis type II). Fatty acid chain elongation in mitochondria uses acyl carrier protein (ACP) as an acyl group carrier, but the enzyme accepts both ACP and CoA thioesters as substrates in vitro. Required for respiration and the maintenance of the mitochondrial compartment. This chain is Enoyl-[acyl-carrier-protein] reductase, mitochondrial (ETR1), found in Candida glabrata (strain ATCC 2001 / BCRC 20586 / JCM 3761 / NBRC 0622 / NRRL Y-65 / CBS 138) (Yeast).